A 285-amino-acid polypeptide reads, in one-letter code: Neuralized-like protein 2 (285 aa).

The interval 1–28 (MADPSEHVGLGGPRSPARPEPPPTRFHQ) is disordered. The 222-residue stretch at 23-244 (PTRFHQVHGA…STKSVRLVQL (222 aa)) folds into the NHR domain. The SOCS box domain maps to 250 to 285 (SLQTLCRLVIHKRVVHRLAIDVLHLPKGLKDFCKYE).

Probable component the ECS(NEURL2) E3 ubiquitin-protein ligase complex consisting of ELOB/Elongin B, ELOC/Elongin C, CUL5, RBX1 and NEURL2. Interacts with CTNNB1. As to expression, expressed specifically in skeletal and cardiac muscles.

The protein resides in the cytoplasm. Its pathway is protein modification; protein ubiquitination. Functionally, plays an important role in the process of myofiber differentiation and maturation. Probable substrate-recognition component of a SCF-like ECS (Elongin BC-CUL2/5-SOCS-box protein) E3 ubiquitin-protein ligase complex, which mediates the ubiquitination of proteins. Probably contributes to catalysis through recognition and positioning of the substrate and the ubiquitin-conjugating enzyme. During myogenesis, controls the ubiquitination and degradation of the specific pool of CTNNB1/beta-catenin located at the sarcolemma. This chain is Neuralized-like protein 2 (Neurl2), found in Mus musculus (Mouse).